The following is a 47-amino-acid chain: RDCESDSHKFHGACFSDTNCANVCQTEGFTAGKCVGVQRHCHCTKDC.

4 disulfide bridges follow: cysteine 3–cysteine 47, cysteine 14–cysteine 34, cysteine 20–cysteine 41, and cysteine 24–cysteine 43.

In terms of biological role, plant defense peptide. The protein is Defensin Tk-AMP-D1.1 of Triticum kiharae (Wheat).